The following is a 591-amino-acid chain: V-type ATP synthase alpha chain (591 aa).

233 to 240 (GPFGAGKT) is an ATP binding site.

It belongs to the ATPase alpha/beta chains family.

It catalyses the reaction ATP + H2O + 4 H(+)(in) = ADP + phosphate + 5 H(+)(out). Produces ATP from ADP in the presence of a proton gradient across the membrane. The V-type alpha chain is a catalytic subunit. This chain is V-type ATP synthase alpha chain, found in Streptococcus pyogenes serotype M1.